A 417-amino-acid polypeptide reads, in one-letter code: NADH-quinone oxidoreductase subunit D (417 aa).

The protein belongs to the complex I 49 kDa subunit family. As to quaternary structure, NDH-1 is composed of 14 different subunits. Subunits NuoB, C, D, E, F, and G constitute the peripheral sector of the complex.

It is found in the cell inner membrane. It carries out the reaction a quinone + NADH + 5 H(+)(in) = a quinol + NAD(+) + 4 H(+)(out). NDH-1 shuttles electrons from NADH, via FMN and iron-sulfur (Fe-S) centers, to quinones in the respiratory chain. The immediate electron acceptor for the enzyme in this species is believed to be ubiquinone. Couples the redox reaction to proton translocation (for every two electrons transferred, four hydrogen ions are translocated across the cytoplasmic membrane), and thus conserves the redox energy in a proton gradient. In Legionella pneumophila subsp. pneumophila (strain Philadelphia 1 / ATCC 33152 / DSM 7513), this protein is NADH-quinone oxidoreductase subunit D.